Consider the following 316-residue polypeptide: D-alanine--D-alanine ligase (316 aa).

One can recognise an ATP-grasp domain in the interval 104-303; sequence KRVWLQHGLP…YADLCVAILA (200 aa). Position 130–185 (130–185) interacts with ATP; that stretch reads PDRLGLPLILKPPHEGSTVGITKVAGYSDMKAAYELAARFDAEVLAEQFITGRELT. Mg(2+) is bound by residues Asp257, Glu270, and Asn272.

Belongs to the D-alanine--D-alanine ligase family. The cofactor is Mg(2+). Mn(2+) is required as a cofactor.

It is found in the cytoplasm. The catalysed reaction is 2 D-alanine + ATP = D-alanyl-D-alanine + ADP + phosphate + H(+). Its pathway is cell wall biogenesis; peptidoglycan biosynthesis. Cell wall formation. The sequence is that of D-alanine--D-alanine ligase from Bordetella bronchiseptica (strain ATCC BAA-588 / NCTC 13252 / RB50) (Alcaligenes bronchisepticus).